Consider the following 205-residue polypeptide: Large ribosomal subunit protein uL4 (205 aa).

Positions 43 to 96 are disordered; that stretch reads GKRQGTSKVKNRSAVRGGGKKPWRQKGTGRARQGSIRSPQWRGGGTVFGPTPRS. The segment covering 51–71 has biased composition (basic residues); that stretch reads VKNRSAVRGGGKKPWRQKGTG.

This sequence belongs to the universal ribosomal protein uL4 family. Part of the 50S ribosomal subunit.

Its function is as follows. One of the primary rRNA binding proteins, this protein initially binds near the 5'-end of the 23S rRNA. It is important during the early stages of 50S assembly. It makes multiple contacts with different domains of the 23S rRNA in the assembled 50S subunit and ribosome. Functionally, forms part of the polypeptide exit tunnel. In Lactobacillus helveticus (strain DPC 4571), this protein is Large ribosomal subunit protein uL4.